Consider the following 89-residue polypeptide: Small ribosomal subunit protein uS15 (89 aa).

It belongs to the universal ribosomal protein uS15 family. As to quaternary structure, part of the 30S ribosomal subunit. Forms a bridge to the 50S subunit in the 70S ribosome, contacting the 23S rRNA.

In terms of biological role, one of the primary rRNA binding proteins, it binds directly to 16S rRNA where it helps nucleate assembly of the platform of the 30S subunit by binding and bridging several RNA helices of the 16S rRNA. Forms an intersubunit bridge (bridge B4) with the 23S rRNA of the 50S subunit in the ribosome. The sequence is that of Small ribosomal subunit protein uS15 from Cupriavidus pinatubonensis (strain JMP 134 / LMG 1197) (Cupriavidus necator (strain JMP 134)).